Here is a 210-residue protein sequence, read N- to C-terminus: Small ribosomal subunit protein uS3 (210 aa).

One can recognise a KH type-2 domain in the interval 38-106; sequence LKSFLKKRLY…EVYLNIQEVR (69 aa).

It belongs to the universal ribosomal protein uS3 family. As to quaternary structure, part of the 30S ribosomal subunit. Forms a tight complex with proteins S10 and S14.

In terms of biological role, binds the lower part of the 30S subunit head. Binds mRNA in the 70S ribosome, positioning it for translation. This chain is Small ribosomal subunit protein uS3, found in Geotalea daltonii (strain DSM 22248 / JCM 15807 / FRC-32) (Geobacter daltonii).